A 320-amino-acid polypeptide reads, in one-letter code: ATP-dependent 6-phosphofructokinase (320 aa).

An ATP-binding site is contributed by G12. Residues 22–26 (RGVVR) and 55–60 (RYSVSD) each bind ADP. ATP is bound by residues 73–74 (RF) and 103–106 (GDGS). Position 104 (D104) interacts with Mg(2+). 126-128 (TID) contacts substrate. The Proton acceptor role is filled by D128. Residue R155 participates in ADP binding. Substrate contacts are provided by residues R163 and 170-172 (MGR). Residues 186–188 (GCE), K212, and 214–216 (KKH) contribute to the ADP site. Substrate contacts are provided by residues E223, R244, and 250 to 253 (HIQR).

Belongs to the phosphofructokinase type A (PFKA) family. ATP-dependent PFK group I subfamily. Prokaryotic clade 'B1' sub-subfamily. Homotetramer. It depends on Mg(2+) as a cofactor.

It is found in the cytoplasm. It carries out the reaction beta-D-fructose 6-phosphate + ATP = beta-D-fructose 1,6-bisphosphate + ADP + H(+). The protein operates within carbohydrate degradation; glycolysis; D-glyceraldehyde 3-phosphate and glycerone phosphate from D-glucose: step 3/4. Its activity is regulated as follows. Allosterically activated by ADP and other diphosphonucleosides, and allosterically inhibited by phosphoenolpyruvate. Its function is as follows. Catalyzes the phosphorylation of D-fructose 6-phosphate to fructose 1,6-bisphosphate by ATP, the first committing step of glycolysis. In Cronobacter sakazakii (strain ATCC BAA-894) (Enterobacter sakazakii), this protein is ATP-dependent 6-phosphofructokinase.